A 283-amino-acid polypeptide reads, in one-letter code: Ribosomal RNA small subunit methyltransferase I (283 aa).

This sequence belongs to the methyltransferase superfamily. RsmI family.

It is found in the cytoplasm. It carries out the reaction cytidine(1402) in 16S rRNA + S-adenosyl-L-methionine = 2'-O-methylcytidine(1402) in 16S rRNA + S-adenosyl-L-homocysteine + H(+). Functionally, catalyzes the 2'-O-methylation of the ribose of cytidine 1402 (C1402) in 16S rRNA. The sequence is that of Ribosomal RNA small subunit methyltransferase I from Haemophilus influenzae (strain ATCC 51907 / DSM 11121 / KW20 / Rd).